The chain runs to 238 residues: Sugar fermentation stimulation protein homolog (238 aa).

The protein belongs to the SfsA family.

The polypeptide is Sugar fermentation stimulation protein homolog (Vibrio vulnificus (strain YJ016)).